Reading from the N-terminus, the 385-residue chain is Protein pelota homolog (385 aa).

Lys-162 participates in a covalent cross-link: Glycyl lysine isopeptide (Lys-Gly) (interchain with G-Cter in SUMO2). Residues Ser-374, Ser-380, Ser-381, and Ser-382 each carry the phosphoserine modification.

Belongs to the eukaryotic release factor 1 family. Pelota subfamily. Component of the Pelota-HBS1L complex, also named Dom34-Hbs1 complex, composed of PELO and HBS1L. Interacts with PINK1. Interacts with ABCE1. Interacts with CNOT4. A divalent metal cation is required as a cofactor. Ubiquitously expressed.

The protein resides in the cytoplasm. Component of the Pelota-HBS1L complex, a complex that recognizes stalled ribosomes and triggers the No-Go Decay (NGD) pathway. In the Pelota-HBS1L complex, PELO recognizes ribosomes stalled at the 3' end of an mRNA and engages stalled ribosomes by destabilizing mRNA in the mRNA channel. Following mRNA extraction from stalled ribosomes by the SKI complex, the Pelota-HBS1L complex promotes recruitment of ABCE1, which drives the disassembly of stalled ribosomes, followed by degradation of damaged mRNAs as part of the NGD pathway. As part of the PINK1-regulated signaling, upon mitochondrial damage is recruited to the ribosome/mRNA-ribonucleoprotein complex associated to mitochondrial outer membrane thereby enabling the recruitment of autophagy receptors and induction of mitophagy. In Homo sapiens (Human), this protein is Protein pelota homolog.